The chain runs to 224 residues: tRNA (guanine-N(7)-)-methyltransferase (224 aa).

Residues glutamate 56, glutamate 81, aspartate 108, and aspartate 131 each coordinate S-adenosyl-L-methionine. The active site involves aspartate 131. Residues lysine 135, aspartate 167, and 202 to 205 each bind substrate; that span reads TKFE.

It belongs to the class I-like SAM-binding methyltransferase superfamily. TrmB family.

The catalysed reaction is guanosine(46) in tRNA + S-adenosyl-L-methionine = N(7)-methylguanosine(46) in tRNA + S-adenosyl-L-homocysteine. It functions in the pathway tRNA modification; N(7)-methylguanine-tRNA biosynthesis. Catalyzes the formation of N(7)-methylguanine at position 46 (m7G46) in tRNA. The polypeptide is tRNA (guanine-N(7)-)-methyltransferase (Nitrosomonas eutropha (strain DSM 101675 / C91 / Nm57)).